Consider the following 132-residue polypeptide: Small ribosomal subunit protein uS8 (132 aa).

This sequence belongs to the universal ribosomal protein uS8 family. In terms of assembly, part of the 30S ribosomal subunit. Contacts proteins S5 and S12.

Functionally, one of the primary rRNA binding proteins, it binds directly to 16S rRNA central domain where it helps coordinate assembly of the platform of the 30S subunit. This Anaeromyxobacter dehalogenans (strain 2CP-1 / ATCC BAA-258) protein is Small ribosomal subunit protein uS8.